The chain runs to 334 residues: D-aspartate oxidase 2 (334 aa).

Aspartate 38, lysine 39, serine 46, glycine 310, and threonine 315 together coordinate FAD.

The protein belongs to the DAMOX/DASOX family. FAD serves as cofactor. In terms of tissue distribution, expressed in the intestinal cells, pharyngeal muscles, and body wall muscles in adult hermaphrodites.

Its subcellular location is the cytoplasm. It carries out the reaction D-aspartate + O2 + H2O = oxaloacetate + H2O2 + NH4(+). The catalysed reaction is D-glutamate + O2 + H2O = H2O2 + 2-oxoglutarate + NH4(+). With respect to regulation, inhibited by thiolactomycin. Selectively catalyzes the oxidative deamination of acidic amino acids. May play a role in the egg-laying events and early development of the worm, in addition to quality control of the germ cells. The protein is D-aspartate oxidase 2 (ddo-2) of Caenorhabditis elegans.